The chain runs to 862 residues: Leucine--tRNA ligase (862 aa).

Positions 44–54 (PYPSGRIHMGH) match the 'HIGH' region motif. Residues 622–626 (KMSKS) carry the 'KMSKS' region motif. ATP is bound at residue lysine 625.

Belongs to the class-I aminoacyl-tRNA synthetase family.

It localises to the cytoplasm. The catalysed reaction is tRNA(Leu) + L-leucine + ATP = L-leucyl-tRNA(Leu) + AMP + diphosphate. The protein is Leucine--tRNA ligase of Rhodospirillum rubrum (strain ATCC 11170 / ATH 1.1.1 / DSM 467 / LMG 4362 / NCIMB 8255 / S1).